A 233-amino-acid chain; its full sequence is Large ribosomal subunit protein uL1 (233 aa).

Belongs to the universal ribosomal protein uL1 family. In terms of assembly, part of the 50S ribosomal subunit.

Binds directly to 23S rRNA. The L1 stalk is quite mobile in the ribosome, and is involved in E site tRNA release. Its function is as follows. Protein L1 is also a translational repressor protein, it controls the translation of the L11 operon by binding to its mRNA. This is Large ribosomal subunit protein uL1 from Photorhabdus laumondii subsp. laumondii (strain DSM 15139 / CIP 105565 / TT01) (Photorhabdus luminescens subsp. laumondii).